The following is a 639-amino-acid chain: Putative cyclic beta-1,2-glucan modification protein (639 aa).

6 consecutive transmembrane segments (helical) span residues 34–54 (ALFT…IVRW), 69–89 (PAWT…ALFG), 96–116 (LLIA…QVFL), 144–164 (WTAV…ALLL), 185–205 (FALP…FSWI), and 227–247 (FALA…AGYM).

The protein resides in the cell membrane. The protein is Putative cyclic beta-1,2-glucan modification protein (cgmA) of Rhizobium meliloti (strain 1021) (Ensifer meliloti).